A 572-amino-acid polypeptide reads, in one-letter code: Protein 5NUC (572 aa).

The N-terminal stretch at Met1–Ala25 is a signal peptide. Asp39 and His41 together coordinate Zn(2+). Residues Cys54 and Cys64 are joined by a disulfide bond. Asn82 is a glycosylation site (N-linked (GlcNAc...) asparagine). Zn(2+) is bound by residues Asp93, Asn125, His227, and His250. Cys360 and Cys365 are joined by a disulfide. The substrate site is built by Arg361, Gln399, Arg404, and Phe427. Residues Asn454 and Asn490 are each glycosylated (N-linked (GlcNAc...) asparagine). Cysteines 488 and 491 form a disulfide. A substrate-binding site is contributed by Phe512–Asp518.

The protein belongs to the 5'-nucleotidase family. Requires Zn(2+) as cofactor.

The enzyme catalyses UDP-sugar + H2O = UMP + alpha-D-aldose 1-phosphate.. It carries out the reaction a ribonucleoside 5'-phosphate + H2O = a ribonucleoside + phosphate. Functionally, degradation of external UDP-glucose to uridine monophosphate and glucose-1-phosphate, which can then be used by the cell. The polypeptide is Protein 5NUC (5NUC) (Lutzomyia longipalpis (Sand fly)).